We begin with the raw amino-acid sequence, 324 residues long: Glutathione synthetase (324 aa).

The ATP-grasp domain occupies 133–317 (KMYALQFTKA…LAHQVIQWVE (185 aa)). Residue 159-215 (VEAKGATVLKPLGNKAGEGILFLQAGDRNFNSIVELSTQQGRLPVMVQTYLPEAKEG) participates in ATP binding. E288 and N290 together coordinate Mg(2+).

This sequence belongs to the prokaryotic GSH synthase family. Mg(2+) is required as a cofactor. Requires Mn(2+) as cofactor.

The catalysed reaction is gamma-L-glutamyl-L-cysteine + glycine + ATP = glutathione + ADP + phosphate + H(+). It participates in sulfur metabolism; glutathione biosynthesis; glutathione from L-cysteine and L-glutamate: step 2/2. This is Glutathione synthetase from Nostoc sp. (strain PCC 7120 / SAG 25.82 / UTEX 2576).